We begin with the raw amino-acid sequence, 323 residues long: tRNA dimethylallyltransferase (323 aa).

18-25 is a binding site for ATP; it reads GPTASGKT. 20–25 contacts substrate; the sequence is TASGKT. Residues 44–47 form an interaction with substrate tRNA region; that stretch reads DSAL.

Belongs to the IPP transferase family. In terms of assembly, monomer. Mg(2+) is required as a cofactor.

It catalyses the reaction adenosine(37) in tRNA + dimethylallyl diphosphate = N(6)-dimethylallyladenosine(37) in tRNA + diphosphate. Catalyzes the transfer of a dimethylallyl group onto the adenine at position 37 in tRNAs that read codons beginning with uridine, leading to the formation of N6-(dimethylallyl)adenosine (i(6)A). The sequence is that of tRNA dimethylallyltransferase from Blochmanniella floridana.